The primary structure comprises 424 residues: MKFDVIIIGGGLAGLACGIRLAEQGKYCAIVSSGQNALHFSSGSLDLLAKLPDGQAVSQPLSALSALAELAPEHPYSKMRNITQLDELVQEAEALLRRCGLDIVGSSAENHLRLTPLGSCRPTWLSLADIPVAPLNGPLPWQRVAVIGIEGFLDFQPQMVASALQDQGIDATADYLHLPALDRLRDNPSEFRAVNIARILDLPENRQPLADELSRLSSTAEMILLPACIGLDKSAPLDALRAVVGKPIQLLPTLPPSLLGMRLHQALRHRFQQLGGLVMPGDAVLRAELVDNRITGLYSRNHGDIPLRAAQMVLASGSFFSNGLVATFDKIYEPILDLDILSLPHRADWSHSNLFAPQPYLQFGVNTDNHLRPLRGGVALENLHAIGAVLGGYDPLQQGCGAGVSLTSAVFVAEQIISEMAVTL.

It belongs to the anaerobic G-3-P dehydrogenase subunit B family. As to quaternary structure, composed of a catalytic GlpA/B dimer and of membrane bound GlpC. FMN serves as cofactor.

It catalyses the reaction a quinone + sn-glycerol 3-phosphate = dihydroxyacetone phosphate + a quinol. The protein operates within polyol metabolism; glycerol degradation via glycerol kinase pathway; glycerone phosphate from sn-glycerol 3-phosphate (anaerobic route): step 1/1. Functionally, conversion of glycerol 3-phosphate to dihydroxyacetone. Uses fumarate or nitrate as electron acceptor. The polypeptide is Anaerobic glycerol-3-phosphate dehydrogenase subunit B (Yersinia pestis bv. Antiqua (strain Antiqua)).